Here is a 157-residue protein sequence, read N- to C-terminus: MIHDAFEDFAAALPQMTALVGLDFGEKTIGVAVSDRIGAVATPLETIRRKKFTLDSNRLLEIIAGRDINGILLGLPRNMDGSEGPRCQSTRAFARNLSRVTDLPIGFWDERLSTVAAERALLEADTSRKRRAEVIDHVAASYILQGALDRMRHIRSS.

The protein belongs to the YqgF nuclease family.

It is found in the cytoplasm. Could be a nuclease involved in processing of the 5'-end of pre-16S rRNA. The chain is Putative pre-16S rRNA nuclease from Ruegeria sp. (strain TM1040) (Silicibacter sp.).